Reading from the N-terminus, the 807-residue chain is Shutoff protein (807 aa).

The segment at 1-88 (MESVEKKDSL…QVGRGDERHG (88 aa)) is disordered. The segment covering 16-29 (FATTASTDAANAPT) has biased composition (polar residues). Composition is skewed to basic and acidic residues over residues 59–70 (RSVPTEDKKQDQ) and 79–88 (QVGRGDERHG). The binding to host EIF4G stretch occupies residues 280–345 (VMSELIVRRA…AVLVTVELEC (66 aa)). The 119-residue stretch at 348–466 (RFFADPEMQR…DLWTAFNERS (119 aa)) folds into the RRM domain. Residues Tyr365 and Tyr682 each carry the phosphotyrosine; by host modification. A disordered region spans residues 684–807 (DPQSGEELNP…AGTARSPTQP (124 aa)). Positions 726–743 (GRGGILGQSGRGGFGRGG) are enriched in gly residues. Positions 744–755 (GGHDGRLGEPRR) are enriched in basic and acidic residues. Basic residues predominate over residues 756–765 (GSFRGRRGVR).

Belongs to the adenoviridae shutoff protein family. As to quaternary structure, monomer. Interacts with hexon protein; this interaction allows chaperoning and trimerization of hexon proteins. Interacts (via N-terminus) with host initiation factor EIF4G (via C-terminus). Interacts (via RRM domain) with viral mRNAs that contain the tripartite leader; this interaction allows ribosome shunting and expression of viral late mRNAs. Might be cleaved by the viral protease. In terms of processing, phosphorylated. Tyrosine phosphorylation enhances preferential binding to tripartite leader mRNAs and allows ribosome shunting. Post-translationally, methylated. Asymmetric dimethylation by host PRMT1 of the Arg/Gly-rich region may regulate shutoff protein binding to hexon and promote the capsid assembly in the nucleus.

The protein localises to the host cytoplasm. Its function is as follows. Protein that inhibits host translation while promoting late viral translation by ribosome shunting. Blocks host cap-dependent translation by binding to eIF4G, displacing MKNK1 from cap initiation complexes and preventing EIF4E phosphorylation. Binds to the tripartite leader sequence of viral late mRNAs and recruits host eIF4G, PABPC1/poly-A binding protein and 40S ribosomes subunits on viral mRNAs, allowing ribosome shunting and efficient translation of late viral mRNAs even though conventional translation via ribosome scanning from the cap has been shut off in the host cell. During assembly, acts as a chaperone protein that helps hexon proteins assembly into trimers. The protein is Shutoff protein of Homo sapiens (Human).